The chain runs to 255 residues: Hydroxyacylglutathione hydrolase (255 aa).

7 residues coordinate Zn(2+): His56, His58, Asp60, His61, His114, Asp133, and His171.

The protein belongs to the metallo-beta-lactamase superfamily. Glyoxalase II family. As to quaternary structure, monomer. Zn(2+) is required as a cofactor.

It carries out the reaction an S-(2-hydroxyacyl)glutathione + H2O = a 2-hydroxy carboxylate + glutathione + H(+). The protein operates within secondary metabolite metabolism; methylglyoxal degradation; (R)-lactate from methylglyoxal: step 2/2. Functionally, thiolesterase that catalyzes the hydrolysis of S-D-lactoyl-glutathione to form glutathione and D-lactic acid. The chain is Hydroxyacylglutathione hydrolase from Rhodopseudomonas palustris (strain HaA2).